A 306-amino-acid chain; its full sequence is Porphobilinogen deaminase (306 aa).

An S-(dipyrrolylmethanemethyl)cysteine modification is found at cysteine 234.

This sequence belongs to the HMBS family. As to quaternary structure, monomer. The cofactor is dipyrromethane.

The catalysed reaction is 4 porphobilinogen + H2O = hydroxymethylbilane + 4 NH4(+). It functions in the pathway porphyrin-containing compound metabolism; protoporphyrin-IX biosynthesis; coproporphyrinogen-III from 5-aminolevulinate: step 2/4. Its function is as follows. Tetrapolymerization of the monopyrrole PBG into the hydroxymethylbilane pre-uroporphyrinogen in several discrete steps. This is Porphobilinogen deaminase from Mycobacteroides abscessus (strain ATCC 19977 / DSM 44196 / CCUG 20993 / CIP 104536 / JCM 13569 / NCTC 13031 / TMC 1543 / L948) (Mycobacterium abscessus).